The sequence spans 83 residues: Cytochrome c oxidase subunit 12, mitochondrial (83 aa).

Residues 24–67 enclose the CHCH domain; it reads TKHCWQSYVDYHKCVNMKGEDFAPCKVFWKTYNALCPLDWIEKW. Residues 27-37 carry the Cx9C motif motif; the sequence is CWQSYVDYHKC. Cystine bridges form between Cys27-Cys59 and Cys37-Cys48. The short motif at 48 to 59 is the Cx10C motif element; the sequence is CKVFWKTYNALC. The residue at position 82 (Ser82) is a Phosphoserine.

The protein belongs to the cytochrome c oxidase subunit 6B family. In terms of assembly, component of the cytochrome c oxidase (complex IV, CIV), a multisubunit enzyme composed of 12 subunits. The complex is composed of a catalytic core of 3 subunits COX1, COX2 and COX3, encoded in the mitochondrial DNA, and 9 supernumerary subunits COX4, COX5A (or COX5B), COX6, COX7, COX8, COX9, COX12, COX13 and COX26, which are encoded in the nuclear genome. The complex exists as a monomer or a dimer and forms supercomplexes (SCs) in the inner mitochondrial membrane with a dimer of ubiquinol-cytochrome c oxidoreductase (cytochrome b-c1 complex, complex III, CIII), resulting in 2 different assemblies (supercomplexes III(2)IV and III(2)IV(2)).

The protein resides in the mitochondrion inner membrane. Its pathway is energy metabolism; oxidative phosphorylation. In terms of biological role, component of the cytochrome c oxidase, the last enzyme in the mitochondrial electron transport chain which drives oxidative phosphorylation. The respiratory chain contains 3 multisubunit complexes succinate dehydrogenase (complex II, CII), ubiquinol-cytochrome c oxidoreductase (cytochrome b-c1 complex, complex III, CIII) and cytochrome c oxidase (complex IV, CIV), that cooperate to transfer electrons derived from NADH and succinate to molecular oxygen, creating an electrochemical gradient over the inner membrane that drives transmembrane transport and the ATP synthase. Cytochrome c oxidase is the component of the respiratory chain that catalyzes the reduction of oxygen to water. Electrons originating from reduced cytochrome c in the intermembrane space (IMS) are transferred via the dinuclear copper A center (CU(A)) of COX2 and heme A of COX1 to the active site in COX1, a binuclear center (BNC) formed by heme A3 and copper B (CU(B)). The BNC reduces molecular oxygen to 2 water molecules unsing 4 electrons from cytochrome c in the IMS and 4 protons from the mitochondrial matrix. In Saccharomyces cerevisiae (strain ATCC 204508 / S288c) (Baker's yeast), this protein is Cytochrome c oxidase subunit 12, mitochondrial (COX12).